Here is a 50-residue protein sequence, read N- to C-terminus: Temporin-SHa (50 aa).

A signal peptide spans 1–10 (FLGTINLSLC). A propeptide spanning residues 11 to 35 (EQERDADEEERRDEPNESNVEVEKR) is cleaved from the precursor. Position 48 is a phenylalanine amide (F48).

Belongs to the frog skin active peptide (FSAP) family. Temporin subfamily. In terms of tissue distribution, expressed by the skin glands.

It is found in the secreted. The protein resides in the target cell membrane. In terms of biological role, amphipathic alpha-helical antimicrobial peptide with highly potent activity against Gram-positive bacteria, and potent activity Gram-negative bacteria and fungi (MIC=2-30 uM). Acts through membranolytic mechanism involving rapid membrane permeabilization and depolarization. Shows a direct extra-cellular antiviral activity probably through degradation of the viral envelope. Also shows a weak indirect antiviral activity by inhibiting virus replication. Also displays anti-trypanosoma and anti-leishmania (prosmastigotes and axenic amastigotes) activity through membranolytic mechanism. Also induces apoptosis in leishmania promastigotes at high peptide concentrations. Shows moderate hemolytic activity (LC(50)=25 uM). In contrast to many antibiotics, this peptide does not induce bacterial resistance. This is Temporin-SHa from Pelophylax saharicus (Sahara frog).